Reading from the N-terminus, the 119-residue chain is Protein TusC (119 aa).

This sequence belongs to the DsrF/TusC family. As to quaternary structure, heterohexamer, formed by a dimer of trimers. The hexameric TusBCD complex contains 2 copies each of TusB, TusC and TusD. The TusBCD complex interacts with TusE.

The protein resides in the cytoplasm. Its function is as follows. Part of a sulfur-relay system required for 2-thiolation of 5-methylaminomethyl-2-thiouridine (mnm(5)s(2)U) at tRNA wobble positions. The sequence is that of Protein TusC from Buchnera aphidicola subsp. Baizongia pistaciae (strain Bp).